Reading from the N-terminus, the 291-residue chain is Nitrogenase iron protein 1 (291 aa).

ATP is bound at residue 10–17 (GKGGIGKS). C98 is a binding site for [4Fe-4S] cluster. R101 carries the ADP-ribosylarginine; by dinitrogenase reductase ADP-ribosyltransferase modification. C133 lines the [4Fe-4S] cluster pocket.

The protein belongs to the NifH/BchL/ChlL family. Homodimer. It depends on [4Fe-4S] cluster as a cofactor. In terms of processing, the reversible ADP-ribosylation of Arg-101 inactivates the nitrogenase reductase and regulates nitrogenase activity.

It catalyses the reaction N2 + 8 reduced [2Fe-2S]-[ferredoxin] + 16 ATP + 16 H2O = H2 + 8 oxidized [2Fe-2S]-[ferredoxin] + 2 NH4(+) + 16 ADP + 16 phosphate + 6 H(+). The key enzymatic reactions in nitrogen fixation are catalyzed by the nitrogenase complex, which has 2 components: the iron protein (component 2) and a component 1 which is either a molybdenum-iron protein, a vanadium-iron, or an iron-iron protein. In Azotobacter chroococcum mcd 1, this protein is Nitrogenase iron protein 1 (nifH1).